The sequence spans 456 residues: Ribonuclease inhibitor (456 aa).

Position 1 is an N-acetylmethionine (methionine 1). LRR repeat units follow at residues 15–43 (WTEL…CKDI), 44–71 (SSAV…VGLV), 72–100 (LQGL…CGIL), 101–128 (PGML…LKLL), 129–157 (CEGL…CEPL), 158–185 (ASVL…VRIL), 186–214 (CQGL…CKDL), 215–242 (CDVV…IAAL), 243–271 (CPGL…CKDL), 272–299 (CRVL…ARLL), 300–328 (CESL…CPYF), 329–356 (CSVL…VQEL), 357–385 (CKAL…CSSL), 386–413 (ANVL…VLQL), and 414–442 (LESL…EEQL). The residue at position 86 (serine 86) is a Phosphoserine.

Forms high-affinity heterodimers with RNASE1, ANG and RNASE2.

It is found in the cytoplasm. Its subcellular location is the nucleus. Ribonuclease inhibitor which inhibits RNASE1, RNASE2 and angiogenin (ANG). May play a role in redox homeostasis. Required to inhibit the cytotoxic tRNA ribonuclease activity of ANG in the cytoplasm in absence of stress. Relocates to the nucleus in response to stress, relieving inhibition of ANG in the cytoplasm, and inhibiting the angiogenic activity of ANG in the nucleus. The protein is Ribonuclease inhibitor (Rnh1) of Mus musculus (Mouse).